The sequence spans 374 residues: Severin (374 aa).

Gelsolin-like repeat units follow at residues 58–109 (FTLE…DEYG), 180–220 (EGKT…KCSA), and 278–369 (EVIK…SFLK).

The protein belongs to the villin/gelsolin family.

Functionally, severin blocks the ends of F-actin and causes the fragmentation and depolymerization of actin filaments. This severin binds stably with actin both in a Ca(2+) dependent and a Ca(2+) independent manner. In Echinococcus granulosus (Hydatid tapeworm), this protein is Severin (AG8).